Here is a 444-residue protein sequence, read N- to C-terminus: MDPLNLSWYDDDLERQNWSRPFNGSEGKADRPHYNYYAMLLTLLIFIIVFGNVLVCMAVSREKALQTTTNYLIVSLAVADLLVATLVMPWVVYLEVVGEWKFSRIHCDIFVTLDVMMCTASILNLCAISIDRYTAVAMPMLYNTRYSSKRRVTVMIAIVWVLSFTISCPLLFGLNNTDQNECIIANPAFVVYSSIVSFYVPFIVTLLVYIKIYIVLRKRRKRVNTKRSSRAFRANLKTPLKGNCTHPEDMKLCTVIMKSNGSFPVNRRRMDAARRAQELEMEMLSSTSPPERTRYSPIPPSHHQLTLPDPSHHGLHSNPDSPAKPEKNGHAKIVNPRIAKFFEIQTMPNGKTRTSLKTMSRRKLSQQKEKKATQMLAIVLGVFIICWLPFFITHILNIHCDCNIPPVLYSAFTWLGYVNSAVNPIIYTTFNIEFRKAFMKILHC.

The Extracellular portion of the chain corresponds to 1–37 (MDPLNLSWYDDDLERQNWSRPFNGSEGKADRPHYNYY). 3 N-linked (GlcNAc...) asparagine glycosylation sites follow: Asn-5, Asn-17, and Asn-23. A helical membrane pass occupies residues 38–60 (AMLLTLLIFIIVFGNVLVCMAVS). The Cytoplasmic portion of the chain corresponds to 61–70 (REKALQTTTN). Residues 71–93 (YLIVSLAVADLLVATLVMPWVVY) traverse the membrane as a helical segment. At 94 to 108 (LEVVGEWKFSRIHCD) the chain is on the extracellular side. Cys-107 and Cys-182 are oxidised to a cystine. A helical membrane pass occupies residues 109–130 (IFVTLDVMMCTASILNLCAISI). Residues 131–151 (DRYTAVAMPMLYNTRYSSKRR) lie on the Cytoplasmic side of the membrane. A helical transmembrane segment spans residues 152–172 (VTVMIAIVWVLSFTISCPLLF). Residues 173 to 188 (GLNNTDQNECIIANPA) lie on the Extracellular side of the membrane. The chain crosses the membrane as a helical span at residues 189-213 (FVVYSSIVSFYVPFIVTLLVYIKIY). The interaction with PPP1R9B stretch occupies residues 211–374 (KIYIVLRKRR…SQQKEKKATQ (164 aa)). Residues 214 to 374 (IVLRKRRKRV…SQQKEKKATQ (161 aa)) lie on the Cytoplasmic side of the membrane. The tract at residues 282 to 329 (EMLSSTSPPERTRYSPIPPSHHQLTLPDPSHHGLHSNPDSPAKPEKNG) is disordered. Residues 375–396 (MLAIVLGVFIICWLPFFITHIL) traverse the membrane as a helical segment. Topologically, residues 397–410 (NIHCDCNIPPVLYS) are extracellular. Cys-400 and Cys-402 form a disulfide bridge. The chain crosses the membrane as a helical span at residues 411-432 (AFTWLGYVNSAVNPIIYTTFNI). Residues 433 to 444 (EFRKAFMKILHC) lie on the Cytoplasmic side of the membrane. A lipid anchor (S-palmitoyl cysteine) is attached at Cys-444.

It belongs to the G-protein coupled receptor 1 family. Forms homo- and heterooligomers with DRD4. The interaction with DRD4 may modulate agonist-induced downstream signaling. Interacts with CADPS and CADPS2. Interacts with GPRASP1, PPP1R9B and CLIC6. Interacts with ARRB2. Interacts with HTR2A. Interacts with DRD1. Interacts with KCNA2. Palmitoylated. Palmitoylation which is required for proper localization to the plasma membrane and stability of the receptor could be carried on by ZDHHC4, ZDHHC3 and ZDHHC8. Expressed in the anterior lobe of the pituitary gland. Expressed ventral tegmental area of the midbrain and the pars compacta of the substantia nigra. Expressed seven times more than isoform short in the caudate nucleus. In terms of tissue distribution, expressed in the anterior lobe of the pituitary gland. Expressed in the caudate nucleus. Not expressed in the wider brain.

The protein resides in the cell membrane. It is found in the golgi apparatus membrane. In terms of biological role, dopamine receptor whose activity is mediated by G proteins which inhibit adenylyl cyclase. Positively regulates postnatal regression of retinal hyaloid vessels via suppression of VEGFR2/KDR activity, downstream of OPN5. This chain is D(2) dopamine receptor (Drd2), found in Rattus norvegicus (Rat).